A 391-amino-acid chain; its full sequence is Tyrosinase-like protein phomQ2 (391 aa).

Residues 1-21 (MDNVGCEASSSRDPKGKKAVG) are disordered. Residues 61-81 (IRGFICATIIFVVCLGALSYI) form a helical membrane-spanning segment. Residues N97 and N141 are each glycosylated (N-linked (GlcNAc...) asparagine). Cu cation-binding residues include H160 and H169. N-linked (GlcNAc...) asparagine glycans are attached at residues N204, N246, and N261. Positions 298 and 324 each coordinate Cu cation. Residue N353 is glycosylated (N-linked (GlcNAc...) asparagine).

This sequence belongs to the tyrosinase family. The cofactor is Cu(2+).

The protein localises to the membrane. It participates in mycotoxin biosynthesis. Tyrosinase-like protein; part of the gene cluster that mediates the biosynthesis of the phomopsins, a group of hexapeptide mycotoxins which infects lupins and causes lupinosis disease in livestock. Within the pathway, phomQ2 is involved in the generation of the common 13-membered macrocycle, possibly by catalyzing the hydroxylation of Tyr. The pathway starts with the processing of the precursor phomA by several endopeptidases including kexin proteases as well as the cluster-specific S41 family peptidase phomP1 and the oligopeptidase phomG to produce 10 identical copies of the hexapeptide Tyr-Val-Ile-Pro-Ile-Asp. After being excised from the precursor peptide, the core peptides are cyclized and modified post-translationally by enzymes encoded within the gene cluster. The timing and order of proteolysis of the phomA precursor and PTMs are still unknown. Two tyrosinase-like enzymes, phomQ1 and phomQ2, catalyze the chlorination and hydroxylation of Tyr, respectively. PhomYb, is proposed to be involved in the construction of the macrocyclic structure. The other 4 ustYa family proteins may be involved in PTMs that generate the unique structure of phomopsin A. PhomYa is required for the hydroxylation of C-beta of Tyr. PhomYc, phomYd, and phomYe are responsible for the biosynthesis of 2,3-dehydroisoleucine (dIle), 2,3-dehydroaspartic acid (dAsp), and 3,4-dehydroproline (dPro), respectively. While dIle formation by phomYc is indispensable for the installation of dAsp by phomYd, the order of the other PTMs have not been elucidated yet. Most of the biosynthetic enzymes likely have broad substrate specificity, and thus, there might be a metabolic grid from a precursor to phomopsin A. The enzyme(s) responsible for the biosynthesis of 3,4-dehydrovaline (dVal) have also not been identified yet. Finally, phomM acts as an S-adenosylmethionine-dependent alpha-N-methyltransferase that catalyzes two successive N-methylation reactions, converting N-desmethyl-phomopsin A to phomopsin A and phomopsin A further to an N,N-dimethylated congener called phomopsin E. The chain is Tyrosinase-like protein phomQ2 from Diaporthe leptostromiformis (Lupinosis disease fungus).